The primary structure comprises 36 residues: Photosystem I reaction center subunit VIII (36 aa).

The chain crosses the membrane as a helical span at residues 6-28; the sequence is LPSIFVPXVGLVFPAIAMASXFL.

Belongs to the PsaI family.

Its subcellular location is the plastid. The protein localises to the chloroplast thylakoid membrane. May help in the organization of the PsaL subunit. The sequence is that of Photosystem I reaction center subunit VIII from Acorus gramineus (Dwarf sweet flag).